We begin with the raw amino-acid sequence, 648 residues long: RAF proto-oncogene serine/threonine-protein kinase (648 aa).

Position 29 is a phosphoserine; by MAPK1 (Ser-29). Position 43 is a phosphoserine; by PKA and MAPK1 (Ser-43). Residues 56 to 131 (NTIRVFLPNK…IGEELQVDFL (76 aa)) enclose the RBD domain. The Phorbol-ester/DAG-type zinc finger occupies 138 to 184 (THNFARKTFLKLAFCDICQKFLLNGFRCQTCGYKFHEHCSTKVPTMC). Zn(2+) contacts are provided by His-139, Cys-152, Cys-155, Cys-165, Cys-168, His-173, Cys-176, and Cys-184. The disordered stretch occupies residues 205–265 (GVPAPPSFPM…RSTSTPNVHM (61 aa)). Ser-233 bears the Phosphoserine; by PKA mark. A compositionally biased stretch (polar residues) spans 239–265 (TFNTSSPSSEGSLSQRQRSTSTPNVHM). Ser-252 carries the phosphoserine modification. At Ser-259 the chain carries Phosphoserine; by PKA, PKC and PKB/AKT1. Thr-268 carries the phosphothreonine; by autocatalysis modification. At Thr-269 the chain carries Phosphothreonine; by PKA. Positions 281–335 (IRSHSESASPSALSSSPNNLSPTGWSQPKTPVPAQRERAPGSGTQEKNKIRPRGQ) are disordered. A compositionally biased stretch (low complexity) spans 286–301 (ESASPSALSSSPNNLS). Residues Ser-289, Ser-296, and Ser-301 each carry the phosphoserine; by MAPK1 modification. An interaction with PEBP1/RKIP region spans residues 331-349 (RPRGQRDSSYYWEIEASEV). Ser-338 is modified (phosphoserine; by PAK1, PAK2, PAK3 and PAK5). A Phosphoserine; by PAK1, PAK2 and PAK3 modification is found at Ser-339. Tyr-340 and Tyr-341 each carry phosphotyrosine; by SRC. The Protein kinase domain maps to 349-609 (VMLSTRIGSG…PQILSSIELL (261 aa)). ATP is bound by residues 355–363 (IGSGSFGTV) and Lys-375. Asp-468 serves as the catalytic Proton acceptor. Ser-471 is modified (phosphoserine). Thr-491 is subject to Phosphothreonine. Ser-494 bears the Phosphoserine mark. 2 positions are modified to phosphoserine; by PKC: Ser-497 and Ser-499. At Arg-563 the chain carries Symmetric dimethylarginine; by PRMT5. Position 621 is a phosphoserine (Ser-621). Ser-642 bears the Phosphoserine; by MAPK1 mark.

It belongs to the protein kinase superfamily. TKL Ser/Thr protein kinase family. RAF subfamily. As to quaternary structure, monomer. Homodimer. Heterodimerizes with BRAF and this heterodimer possesses a highly increased kinase activity compared to the respective homodimers or monomers. Heterodimerization is mitogen-regulated and enhanced by 14-3-3 proteins. MAPK1/ERK2 activation can induce a negative feedback that promotes the dissociation of the heterodimer. Forms a multiprotein complex with Ras (M-Ras/MRAS), SHOC2 and protein phosphatase 1 (PPP1CA, PPP1CB and PPP1CC). Interacts with LZTR1. Interacts with Ras proteins; the interaction is antagonized by RIN1. Weakly interacts with RIT1. Interacts (via N-terminus) with RGS14 (via RBD domains); the interaction mediates the formation of a ternary complex with BRAF, a ternary complex inhibited by GNAI1. Probably forms a complex composed of chaperones HSP90 and HSP70, co-chaperones CDC37, PPP5C, TSC1 and client protein TSC2, CDK4, AKT, RAF1 and NR3C1; this complex does not contain co-chaperones STIP1/HOP and PTGES3/p23. Interacts with STK3/MST2; the interaction inhibits its pro-apoptotic activity. Interacts (when phosphorylated at Ser-259) with YWHAZ (unphosphorylated at 'Thr-232'). Interacts with MAP2K1/MEK1 and MAP2K2/MEK2. Interacts with MAP3K5/ASF1 (via N-terminus) and this interaction inhibits the proapoptotic function of MAP3K5/ASK1. Interacts with PAK1 (via kinase domain). The Ser-338 and Ser-339 phosphorylated form (by PAK1) interacts with BCL2. Interacts with PEBP1/RKIP and this interaction is enhanced if RAF1 is phosphorylated on residues Ser-338, Ser-339, Tyr-340 and Tyr-341. Interacts with ADCY2, ADCY5, ADCY6, DGKH, RCAN1/DSCR1, PPP1R12A, PKB/AKT1, SPRY2, SPRY4, CNKSR1/CNK1, KSR2 and PHB/prohibitin. The phosphorylated form interacts with PIN1. Interacts with PPP2CA, PPP2R1B and ROCK2. In its active form, interacts with PRMT5. Interacts with FAM83B; displaces 14-3-3 proteins from RAF1 and activates RAF1. Interacts with PDE8A; the interaction promotes RAF1 activity. Interacts with MFHAS1. Interacts with GLS. Interacts with NEK10 and MAP2K1; the interaction is direct with NEK10 and required for ERK1/2-signaling pathway activation in response to UV irradiation. It depends on Zn(2+) as a cofactor. Post-translationally, phosphorylation at Thr-269, Ser-338, Tyr-341, Thr-491 and Ser-494 results in its activation. Phosphorylation at Ser-29, Ser-43, Ser-289, Ser-296, Ser-301 and Ser-642 by MAPK1/ERK2 results in its inactivation. Phosphorylation at Ser-259 induces the interaction with YWHAZ and inactivates kinase activity. Dephosphorylation of Ser-259 by the SHOC2-MRAS-PP1c (SMP) complex consisting of SHOC2, GTP-bound M-Ras/MRAS and the catalytic subunit of protein phosphatase 1 (PPP1CA, PPP1CB or PPP1CC); this relieves inactivation and stimulates kinase activity. Phosphorylation at Ser-338 by PAK1 and PAK5 and Ser-339 by PAK1 is required for its mitochondrial localization. Phosphorylation at Ser-621 in response to growth factor treatment stabilizes the protein, possibly by preventing proteasomal degradation. Phosphorylation at Ser-289, Ser-296, Ser-301, Ser-338 and Ser-621 are somehow linked to the methylation potential of cells. Treatment of cells with HGF in the presence of the methylation inhibitor 5'-methylthioadenosine (MTA) results in increased phosphorylation at Ser-338 and Ser-621 and decreased phosphorylation at Ser-296, Ser-301 and Ser-338. Dephosphorylation at Ser-338 by PPP5C results in a decreased of activity. Methylated at Arg-563 in response to EGF treatment. This modification leads to destabilization of the protein, possibly through proteasomal degradation. As to expression, present in all tissues tested: testis, ovary, small intestine, colon, peripheral blood leukocytes, fetal liver, bone marrow, thymus, lymph node and spleen, and the cell lines melanoma G-361, lung carcinoma A-549, colorectal adenocarcinoma SW480, Burkitt's lymphoma Raji and lymphoblastic leukemia MOLT-4. In skeletal muscle, isoform 1 is more abundant than isoform 2.

It localises to the cytoplasm. The protein resides in the cell membrane. The protein localises to the mitochondrion. It is found in the nucleus. The catalysed reaction is L-seryl-[protein] + ATP = O-phospho-L-seryl-[protein] + ADP + H(+). The enzyme catalyses L-threonyl-[protein] + ATP = O-phospho-L-threonyl-[protein] + ADP + H(+). Its activity is regulated as follows. Regulation is a highly complex process involving membrane recruitment, protein-protein interactions, dimerization, and phosphorylation/dephosphorylation events. Ras-GTP recruits RAF1 to the membrane, thereby promoting its activation. The inactive conformation of RAF1 is maintained by autoinhibitory interactions occurring between the N-terminal regulatory and the C-terminal catalytic domains and by the binding of a 14-3-3 protein that contacts two phosphorylation sites, Ser-259 and Ser-621. Upon mitogenic stimulation, Ras and PPP2R1A cooperate to release autoinhibition and the subsequent phosphorylation of activating sites: Ser-338, Tyr-341, Thr-491, and Ser-494, yields a fully active kinase. Through a negative feedback mechanism involving MAPK1/ERK2, RAF1 is phosphorylated on Ser-29, Ser-43, Ser-289, Ser-296, Ser-301 and Ser-642 by MAPK1/ERK2, which yields an inactive, desensitized kinase. The signaling-competent conformation of RAF1 is finally re-established by the coordinated action of PIN1, a prolyl isomerase that converts pSer and pThr residues from the cis to the trans conformation, which is preferentially recognized and dephosphorylated by PPP2R1A. Activated by homodimerization and heterodimerization (with BRAF). Also regulated through association with other proteins such as KSR2, CNKSR1/CNK1, PEBP1/RKIP, PHB/prohibitin and SPRY4. PEBP1/RKIP acts by dissociating RAF1 from its substrates MAP2K1/MEK1 and MAP2K2/MEK2. PHB/prohibitin facilitates the displacement of 14-3-3 from RAF1 by activated Ras, thereby promoting cell membrane localization and phosphorylation of RAF1 at the activating Ser-338. SPRY4 inhibits Ras-independent, but not Ras-dependent, activation of RAF1. CNKSR1/CNK1 regulates Src-mediated RAF1 activation. Its function is as follows. Serine/threonine-protein kinase that acts as a regulatory link between the membrane-associated Ras GTPases and the MAPK/ERK cascade, and this critical regulatory link functions as a switch determining cell fate decisions including proliferation, differentiation, apoptosis, survival and oncogenic transformation. RAF1 activation initiates a mitogen-activated protein kinase (MAPK) cascade that comprises a sequential phosphorylation of the dual-specific MAPK kinases (MAP2K1/MEK1 and MAP2K2/MEK2) and the extracellular signal-regulated kinases (MAPK3/ERK1 and MAPK1/ERK2). The phosphorylated form of RAF1 (on residues Ser-338 and Ser-339, by PAK1) phosphorylates BAD/Bcl2-antagonist of cell death at 'Ser-75'. Phosphorylates adenylyl cyclases: ADCY2, ADCY5 and ADCY6, resulting in their activation. Phosphorylates PPP1R12A resulting in inhibition of the phosphatase activity. Phosphorylates TNNT2/cardiac muscle troponin T. Can promote NF-kB activation and inhibit signal transducers involved in motility (ROCK2), apoptosis (MAP3K5/ASK1 and STK3/MST2), proliferation and angiogenesis (RB1). Can protect cells from apoptosis also by translocating to the mitochondria where it binds BCL2 and displaces BAD/Bcl2-antagonist of cell death. Plays a role in the oncogenic transformation of epithelial cells via repression of the TJ protein, occludin (OCLN) by inducing the up-regulation of a transcriptional repressor SNAI2/SLUG, which induces down-regulation of OCLN. Restricts caspase activation in response to selected stimuli, notably Fas stimulation, pathogen-mediated macrophage apoptosis, and erythroid differentiation. Regulates Rho signaling and migration, and is required for normal wound healing. In Mus musculus (Mouse), this protein is RAF proto-oncogene serine/threonine-protein kinase (Raf1).